The primary structure comprises 806 residues: N-terminal kinase-like protein (806 aa).

A Protein kinase domain is found at phenylalanine 14 to leucine 314. HEAT repeat units lie at residues isoleucine 350–glutamine 388, isoleucine 389–glutamate 427, and isoleucine 507–threonine 545. Disordered stretches follow at residues arginine 586 to arginine 642 and aspartate 663 to aspartate 806. Residues arginine 601–alanine 611 are compositionally biased toward pro residues. Serine 752 is subject to Phosphoserine. A compositionally biased stretch (acidic residues) spans serine 752–glutamate 762. A coiled-coil region spans residues glutamate 755–lysine 795. Composition is skewed to basic and acidic residues over residues alanine 763–alanine 773 and arginine 780–threonine 793. Positions lysine 791 to aspartate 806 are interaction with COPB1.

The protein belongs to the protein kinase superfamily. As to quaternary structure, homooligomer. Interacts with GORAB. Interacts with COPA, COPB1 and COPB2. Interacts with AP2B1. Expressed in diaphragm, quadriceps, thymus, liver, lung, spleen, kidney, heart and brain. Prominently expressed in neurons, and enriched at central nervous system synapses and neuromuscular junctions.

Its subcellular location is the cytoplasm. It localises to the cytoskeleton. The protein resides in the microtubule organizing center. The protein localises to the centrosome. It is found in the endoplasmic reticulum-Golgi intermediate compartment. Its subcellular location is the golgi apparatus. It localises to the cis-Golgi network. In terms of biological role, regulates COPI-mediated retrograde protein traffic at the interface between the Golgi apparatus and the endoplasmic reticulum. Involved in the maintenance of the Golgi apparatus morphology. The chain is N-terminal kinase-like protein (Scyl1) from Mus musculus (Mouse).